The following is a 606-amino-acid chain: 4-hydroxy-3-methylbut-2-en-1-yl diphosphate synthase (flavodoxin) (606 aa).

[4Fe-4S] cluster is bound by residues Cys-513, Cys-516, Cys-547, and Glu-554.

It belongs to the IspG family. It depends on [4Fe-4S] cluster as a cofactor.

It carries out the reaction (2E)-4-hydroxy-3-methylbut-2-enyl diphosphate + oxidized [flavodoxin] + H2O + 2 H(+) = 2-C-methyl-D-erythritol 2,4-cyclic diphosphate + reduced [flavodoxin]. Its pathway is isoprenoid biosynthesis; isopentenyl diphosphate biosynthesis via DXP pathway; isopentenyl diphosphate from 1-deoxy-D-xylulose 5-phosphate: step 5/6. Converts 2C-methyl-D-erythritol 2,4-cyclodiphosphate (ME-2,4cPP) into 1-hydroxy-2-methyl-2-(E)-butenyl 4-diphosphate. This chain is 4-hydroxy-3-methylbut-2-en-1-yl diphosphate synthase (flavodoxin), found in Chlamydia caviae (strain ATCC VR-813 / DSM 19441 / 03DC25 / GPIC) (Chlamydophila caviae).